The primary structure comprises 303 residues: Aspartate carbamoyltransferase catalytic subunit (303 aa).

Residues R49 and T50 each coordinate carbamoyl phosphate. K77 contacts L-aspartate. Residues R99, H126, and Q129 each coordinate carbamoyl phosphate. R159 and R211 together coordinate L-aspartate. Positions 252 and 253 each coordinate carbamoyl phosphate.

It belongs to the aspartate/ornithine carbamoyltransferase superfamily. ATCase family. As to quaternary structure, heterododecamer (2C3:3R2) of six catalytic PyrB chains organized as two trimers (C3), and six regulatory PyrI chains organized as three dimers (R2).

The enzyme catalyses carbamoyl phosphate + L-aspartate = N-carbamoyl-L-aspartate + phosphate + H(+). It participates in pyrimidine metabolism; UMP biosynthesis via de novo pathway; (S)-dihydroorotate from bicarbonate: step 2/3. In terms of biological role, catalyzes the condensation of carbamoyl phosphate and aspartate to form carbamoyl aspartate and inorganic phosphate, the committed step in the de novo pyrimidine nucleotide biosynthesis pathway. The protein is Aspartate carbamoyltransferase catalytic subunit of Listeria monocytogenes serovar 1/2a (strain ATCC BAA-679 / EGD-e).